Here is a 243-residue protein sequence, read N- to C-terminus: UPF0758 protein sll0766 (243 aa).

The MPN domain occupies 113-235 (VVDSPEAAAI…HQSLRQCTDL (123 aa)). The Zn(2+) site is built by His184, His186, and Asp197. The JAMM motif motif lies at 184-197 (HNHPSGGLEPSPED).

It belongs to the UPF0758 family.

This is UPF0758 protein sll0766 from Synechocystis sp. (strain ATCC 27184 / PCC 6803 / Kazusa).